Reading from the N-terminus, the 107-residue chain is uncharacterized protein (107 aa).

It belongs to the HesB/IscA family.

This is an uncharacterized protein from Azotobacter vinelandii.